Consider the following 148-residue polypeptide: Aspartate carbamoyltransferase regulatory chain (148 aa).

Zn(2+)-binding residues include C106, C111, C134, and C137.

Belongs to the PyrI family. Contains catalytic and regulatory chains. Zn(2+) serves as cofactor.

Involved in allosteric regulation of aspartate carbamoyltransferase. This is Aspartate carbamoyltransferase regulatory chain from Methanococcus maripaludis (strain C7 / ATCC BAA-1331).